The chain runs to 501 residues: Aldehyde dehydrogenase 1A1 (501 aa).

Ser2 is modified (N-acetylserine). Lys91 and Lys128 each carry N6-acetyllysine. NAD(+) contacts are provided by residues 167-170 (LPWN), 193-196 (KPAE), 226-227 (GP), and 246-247 (GS). Residue Lys252 is modified to N6-acetyllysine. Glu269 serves as the catalytic Proton acceptor. 269 to 271 (ELG) lines the NAD(+) pocket. Residue Cys303 is the Nucleophile of the active site. A mediates interaction with PRMT3 region spans residues 336 to 501 (LTPGVSQGPQ…VTVKISQKNS (166 aa)). A Phosphothreonine modification is found at Thr337. 349–353 (EQYDK) provides a ligand contact to NAD(+). N6-acetyllysine is present on residues Lys353 and Lys367. An NAD(+)-binding site is contributed by 400–402 (EIF). N6-acetyllysine is present on Lys410. Position 413 is a phosphoserine (Ser413). 3 positions are modified to N6-acetyllysine: Lys419, Lys435, and Lys495.

It belongs to the aldehyde dehydrogenase family. In terms of assembly, homotetramer. Interacts with PRMT3; the interaction is direct, inhibits ALDH1A1 aldehyde dehydrogenase activity and is independent of the methyltransferase activity of PRMT3. Post-translationally, the N-terminus is blocked most probably by acetylation.

The protein localises to the cytoplasm. The protein resides in the cytosol. Its subcellular location is the cell projection. It is found in the axon. It catalyses the reaction an aldehyde + NAD(+) + H2O = a carboxylate + NADH + 2 H(+). The catalysed reaction is all-trans-retinal + NAD(+) + H2O = all-trans-retinoate + NADH + 2 H(+). The enzyme catalyses 9-cis-retinal + NAD(+) + H2O = 9-cis-retinoate + NADH + 2 H(+). It carries out the reaction 11-cis-retinal + NAD(+) + H2O = 11-cis-retinoate + NADH + 2 H(+). It catalyses the reaction 13-cis-retinal + NAD(+) + H2O = 13-cis-retinoate + NADH + 2 H(+). The catalysed reaction is 3-deoxyglucosone + NAD(+) + H2O = 2-dehydro-3-deoxy-D-gluconate + NADH + 2 H(+). The enzyme catalyses (E)-4-hydroxynon-2-enal + NAD(+) + H2O = (E)-4-hydroxynon-2-enoate + NADH + 2 H(+). It carries out the reaction malonaldehyde + NAD(+) + H2O = 3-oxopropanoate + NADH + 2 H(+). It catalyses the reaction hexanal + NAD(+) + H2O = hexanoate + NADH + 2 H(+). The catalysed reaction is propanal + NAD(+) + H2O = propanoate + NADH + 2 H(+). The enzyme catalyses acetaldehyde + NAD(+) + H2O = acetate + NADH + 2 H(+). It carries out the reaction benzaldehyde + NAD(+) + H2O = benzoate + NADH + 2 H(+). It catalyses the reaction 4-aminobutanal + NAD(+) + H2O = 4-aminobutanoate + NADH + 2 H(+). It participates in cofactor metabolism; retinol metabolism. Functionally, cytosolic dehydrogenase that catalyzes the irreversible oxidation of a wide range of aldehydes to their corresponding carboxylic acid. Functions downstream of retinol dehydrogenases and catalyzes the oxidation of retinaldehyde into retinoic acid, the second step in the oxidation of retinol/vitamin A into retinoic acid. This pathway is crucial to control the levels of retinol and retinoic acid, two important molecules which excess can be teratogenic and cytotoxic. Also oxidizes aldehydes resulting from lipid peroxidation like (E)-4-hydroxynon-2-enal/HNE, malonaldehyde and hexanal that form protein adducts and are highly cytotoxic. By participating for instance to the clearance of (E)-4-hydroxynon-2-enal/HNE in the lens epithelium prevents the formation of HNE-protein adducts and lens opacification. Also functions downstream of fructosamine-3-kinase in the fructosamine degradation pathway by catalyzing the oxidation of 3-deoxyglucosone, the carbohydrate product of fructosamine 3-phosphate decomposition, which is itself a potent glycating agent that may react with lysine and arginine side-chains of proteins. Also has an aminobutyraldehyde dehydrogenase activity and is probably part of an alternative pathway for the biosynthesis of GABA/4-aminobutanoate in midbrain, thereby playing a role in GABAergic synaptic transmission. This chain is Aldehyde dehydrogenase 1A1, found in Equus caballus (Horse).